The chain runs to 323 residues: Pseudouridine-5'-phosphate glycosidase (323 aa).

E43 serves as the catalytic Proton donor. Substrate is bound by residues K104 and V124. Residue D156 participates in Mn(2+) binding. 158-160 (SAD) is a substrate binding site. K177 (nucleophile) is an active-site residue.

This sequence belongs to the pseudouridine-5'-phosphate glycosidase family. As to quaternary structure, homotrimer. The cofactor is Mn(2+).

The enzyme catalyses D-ribose 5-phosphate + uracil = psi-UMP + H2O. Catalyzes the reversible cleavage of pseudouridine 5'-phosphate (PsiMP) to ribose 5-phosphate and uracil. Functions biologically in the cleavage direction, as part of a pseudouridine degradation pathway. This Streptomyces griseus subsp. griseus (strain JCM 4626 / CBS 651.72 / NBRC 13350 / KCC S-0626 / ISP 5235) protein is Pseudouridine-5'-phosphate glycosidase.